The chain runs to 339 residues: Aspartate carbamoyltransferase catalytic subunit (339 aa).

2 residues coordinate carbamoyl phosphate: R59 and T60. K87 provides a ligand contact to L-aspartate. Residues R109, H142, and Q145 each contribute to the carbamoyl phosphate site. R182 and R253 together coordinate L-aspartate. Carbamoyl phosphate contacts are provided by G294 and P295.

This sequence belongs to the aspartate/ornithine carbamoyltransferase superfamily. ATCase family. In terms of assembly, heterododecamer (2C3:3R2) of six catalytic PyrB chains organized as two trimers (C3), and six regulatory PyrI chains organized as three dimers (R2).

The enzyme catalyses carbamoyl phosphate + L-aspartate = N-carbamoyl-L-aspartate + phosphate + H(+). Its pathway is pyrimidine metabolism; UMP biosynthesis via de novo pathway; (S)-dihydroorotate from bicarbonate: step 2/3. Functionally, catalyzes the condensation of carbamoyl phosphate and aspartate to form carbamoyl aspartate and inorganic phosphate, the committed step in the de novo pyrimidine nucleotide biosynthesis pathway. This Prochlorococcus marinus (strain NATL2A) protein is Aspartate carbamoyltransferase catalytic subunit.